Consider the following 284-residue polypeptide: 1D-myo-inositol 2-acetamido-2-deoxy-alpha-D-glucopyranoside deacetylase (284 aa).

Residues His12, Asp15, and His146 each coordinate Zn(2+).

It belongs to the MshB deacetylase family. It depends on Zn(2+) as a cofactor.

The catalysed reaction is 1D-myo-inositol 2-acetamido-2-deoxy-alpha-D-glucopyranoside + H2O = 1D-myo-inositol 2-amino-2-deoxy-alpha-D-glucopyranoside + acetate. Its function is as follows. Catalyzes the deacetylation of 1D-myo-inositol 2-acetamido-2-deoxy-alpha-D-glucopyranoside (GlcNAc-Ins) in the mycothiol biosynthesis pathway. The polypeptide is 1D-myo-inositol 2-acetamido-2-deoxy-alpha-D-glucopyranoside deacetylase (Mycolicibacterium gilvum (strain PYR-GCK) (Mycobacterium gilvum (strain PYR-GCK))).